The sequence spans 514 residues: MGKDFRYYFQHPWSRMIVAYLVIFFNFLIFAEDPVSHSQTEANVIVVGNCFSFVTNKYPRGVGWRILKVLLWLLAILTGLIAGKFLFHQRLFGQLLRLKMFREDHGSWMTMFFSTILFLFIFSHIYNTILLMDGNMGAYIITDYMGIRNESFMKLAAVGTWMGDFVTAWMVTDMMLQDKPYPDWGKSARAFWKKGNVRITLFWTVLFTLTSVVVLVITTDWISWDKLNRGFLPSDEVSRAFLASFILVFDLLIVMQDWEFPHFMGDVDVNLPGLHTPHMQFKIPFFQKIFKEEYRIHITGKWFNYGIIFLVLILDLNMWKNQIFYKPHEYGQYIGPGQKIYTVKDSESLKDLNRTKLSWEWRSNHTNPRTNKTYVEGDMFLHSRFIGASLDVKCLAFVPSLIAFVWFGFFIWFFGRFLKNEPRMENQDKTYTRMKRKSPSEHSKDMGITRENTQASVEDPLNDPSLVCIRSDFNEIVYKSSHLTSENLSSQLNESTSATEADQDPTTSKSTPTN.

Over 1-15 (MGKDFRYYFQHPWSR) the chain is Cytoplasmic. A helical membrane pass occupies residues 16-36 (MIVAYLVIFFNFLIFAEDPVS). Over 37–65 (HSQTEANVIVVGNCFSFVTNKYPRGVGWR) the chain is Extracellular. Residues 66–86 (ILKVLLWLLAILTGLIAGKFL) traverse the membrane as a helical segment. Over 87–110 (FHQRLFGQLLRLKMFREDHGSWMT) the chain is Cytoplasmic. Residues 111–131 (MFFSTILFLFIFSHIYNTILL) form a helical membrane-spanning segment. The Extracellular portion of the chain corresponds to 132–154 (MDGNMGAYIITDYMGIRNESFMK). The chain crosses the membrane as a helical span at residues 155-175 (LAAVGTWMGDFVTAWMVTDMM). The Cytoplasmic segment spans residues 176–198 (LQDKPYPDWGKSARAFWKKGNVR). Residues 199-219 (ITLFWTVLFTLTSVVVLVITT) traverse the membrane as a helical segment. The Extracellular segment spans residues 220–239 (DWISWDKLNRGFLPSDEVSR). The chain crosses the membrane as a helical span at residues 240-260 (AFLASFILVFDLLIVMQDWEF). Over 261-295 (PHFMGDVDVNLPGLHTPHMQFKIPFFQKIFKEEYR) the chain is Cytoplasmic. The helical transmembrane segment at 296-316 (IHITGKWFNYGIIFLVLILDL) threads the bilayer. The Extracellular segment spans residues 317 to 394 (NMWKNQIFYK…FIGASLDVKC (78 aa)). Residues asparagine 353 and asparagine 371 are each glycosylated (N-linked (GlcNAc...) asparagine). Residues 395–415 (LAFVPSLIAFVWFGFFIWFFG) form a helical membrane-spanning segment. The Cytoplasmic portion of the chain corresponds to 416–514 (RFLKNEPRME…PTTSKSTPTN (99 aa)). Disordered stretches follow at residues 429 to 459 (KTYT…SVED) and 486 to 514 (ENLS…TPTN). Over residues 438 to 448 (SPSEHSKDMGI) the composition is skewed to basic and acidic residues. The residue at position 453 (threonine 453) is a Phosphothreonine.

Belongs to the TMEM117 family.

Its subcellular location is the cell membrane. Involved in endoplasmic reticulum (ER) stress-induced cell death pathway. The protein is Transmembrane protein 117 (TMEM117) of Homo sapiens (Human).